Here is a 401-residue protein sequence, read N- to C-terminus: Heat stress transcription factor A-4a (401 aa).

A DNA-binding region spans residues 13-107 (LPPFLTKTYE…LMKNIHRRKP (95 aa)). Residues 122-188 (PLTDSERVRM…TMVSFVSQVL (67 aa)) form a hydrophobic repeat HR-A/B region. The Nuclear localization signal motif lies at 207-213 (RKRRFPR). An AHA1 motif is present at residues 256 to 265 (IAIWENLVSD). An AHA2 motif is present at residues 341–350 (DGFWQQFFSE). The segment at 351–373 (NPGSTEQREVQLERKDDKDKAGV) is disordered. Residues 356–373 (EQREVQLERKDDKDKAGV) show a composition bias toward basic and acidic residues. Residues 388-395 (ITEQLGHL) carry the Nuclear export signal motif.

The protein belongs to the HSF family. Class A subfamily. As to quaternary structure, homotrimer. In terms of processing, exhibits temperature-dependent phosphorylation.

The protein localises to the cytoplasm. It localises to the nucleus. Its function is as follows. Transcriptional activator that specifically binds DNA sequence 5'-AGAAnnTTCT-3' known as heat shock promoter elements (HSE). The sequence is that of Heat stress transcription factor A-4a (HSFA4A) from Arabidopsis thaliana (Mouse-ear cress).